Consider the following 287-residue polypeptide: Bifunctional protein FolD (287 aa).

NADP(+) contacts are provided by residues 166-168 (GAS) and I232.

This sequence belongs to the tetrahydrofolate dehydrogenase/cyclohydrolase family. In terms of assembly, homodimer.

It catalyses the reaction (6R)-5,10-methylene-5,6,7,8-tetrahydrofolate + NADP(+) = (6R)-5,10-methenyltetrahydrofolate + NADPH. It carries out the reaction (6R)-5,10-methenyltetrahydrofolate + H2O = (6R)-10-formyltetrahydrofolate + H(+). It participates in one-carbon metabolism; tetrahydrofolate interconversion. In terms of biological role, catalyzes the oxidation of 5,10-methylenetetrahydrofolate to 5,10-methenyltetrahydrofolate and then the hydrolysis of 5,10-methenyltetrahydrofolate to 10-formyltetrahydrofolate. The polypeptide is Bifunctional protein FolD (Aeromonas hydrophila subsp. hydrophila (strain ATCC 7966 / DSM 30187 / BCRC 13018 / CCUG 14551 / JCM 1027 / KCTC 2358 / NCIMB 9240 / NCTC 8049)).